The primary structure comprises 660 residues: Acetyl-coenzyme A synthetase (660 aa).

CoA-binding positions include 197–200 and threonine 317; that span reads RGGK. ATP is bound by residues 397–399, 421–426, aspartate 512, and arginine 528; these read GEP and DTFWQT. Serine 536 serves as a coordination point for CoA. Arginine 539 is an ATP binding site. Mg(2+)-binding residues include valine 550 and valine 555. Lysine 625 carries the N6-acetyllysine modification.

Belongs to the ATP-dependent AMP-binding enzyme family. Mg(2+) is required as a cofactor. Acetylated. Deacetylation by the SIR2-homolog deacetylase activates the enzyme.

It catalyses the reaction acetate + ATP + CoA = acetyl-CoA + AMP + diphosphate. In terms of biological role, catalyzes the conversion of acetate into acetyl-CoA (AcCoA), an essential intermediate at the junction of anabolic and catabolic pathways. AcsA undergoes a two-step reaction. In the first half reaction, AcsA combines acetate with ATP to form acetyl-adenylate (AcAMP) intermediate. In the second half reaction, it can then transfer the acetyl group from AcAMP to the sulfhydryl group of CoA, forming the product AcCoA. The protein is Acetyl-coenzyme A synthetase of Cupriavidus pinatubonensis (strain JMP 134 / LMG 1197) (Cupriavidus necator (strain JMP 134)).